The chain runs to 657 residues: Transmembrane protein 232 (657 aa).

Helical transmembrane passes span 168-188 and 353-373; these read IGYLVFLRLFIFFLHGHLESF and WAWNVVYIYTVILAEICLYAA.

The protein localises to the membrane. Functionally, plays a critical role for male fertility and sperm motility by regulating sperm cytoplasm removal and maintaining axoneme integrity. The protein is Transmembrane protein 232 (TMEM232) of Homo sapiens (Human).